A 453-amino-acid chain; its full sequence is MAVATAPSLNRHFPRRISNLYSRVKQRRPWLPPGDATLFNSRRNWDSHLFVYASSSSSPSSSPPSPNSPTDDLTAELCVNTGLDLFKRGRVKDALVQFETALSLAPNPIESQAAYYNKACCHAYRGEGKKAVDCLRIALRDYNLKFATILNDPDLASFRALPEFKELQEEARLGGEDIGDNFRRDLKLISEVRAPFRGVRKFFYFAFAAAAGISMFFTVPRLVQAIRGGDGAPNLLETTGNAAINIGGIVVMVSLFLWENKKEEEQMVQITRDETLSRLPLRLSTNRVVELVQLRDTVRPVILAGKKETVTLAMQKADRFRTELLRRGVLLVPVVWGERKTPEIEKKGFGASSKAATSLPSIGEDFDTRAQSVVAQSKLKGEIRFKAETVSPGEWERWIRDQQISEGVNPGDDVYIILRLDGRVRRSGRGMPDWAEISKELPPMDDVLSKLER.

Residues 1–92 (MAVATAPSLN…LDLFKRGRVK (92 aa)) constitute a chloroplast transit peptide. TPR repeat units lie at residues 75 to 108 (AELC…APNP) and 112 to 145 (QAAY…YNLK). A run of 2 helical transmembrane segments spans residues 202-222 (FFYF…VPRL) and 238-258 (TTGN…LFLW).

As to quaternary structure, interacts with psbA, but not with psbD, petB, ALB3, LPA2 or LPA3. Is not a component of the PSII complex.

It is found in the plastid. Its subcellular location is the chloroplast thylakoid membrane. Its function is as follows. Chaperone required for efficient photosystem II (PSII) assembly. Binds to psbA during de novo biogenesis of PSII. This is Protein LOW PSII ACCUMULATION 1, chloroplastic (LPA1) from Arabidopsis thaliana (Mouse-ear cress).